The chain runs to 577 residues: Probable cytochrome c biosynthesis protein (577 aa).

It belongs to the CcmF/CycK/Ccl1/NrfE/CcsA family.

The protein resides in the mitochondrion. Its function is as follows. Could be involved in assembly and maturation of cytochromes c. May play a role in guidance of apocytochromes and heme groups for the covalent linkage introduced by the cytochrome-c-heme lyase. The protein is Probable cytochrome c biosynthesis protein of Oenothera berteroana (Bertero's evening primrose).